The sequence spans 304 residues: Protein ML (304 aa).

Blocks host IRF3 and IRF7, thereby inhibiting IFN-beta expression and activation of host antiviral state. The chain is Protein ML from Thogoto virus (isolate SiAr 126) (Tho).